We begin with the raw amino-acid sequence, 345 residues long: Tetraacyldisaccharide 4'-kinase (345 aa).

61–68 (TAGGTGKT) contacts ATP.

This sequence belongs to the LpxK family.

The catalysed reaction is a lipid A disaccharide + ATP = a lipid IVA + ADP + H(+). Its pathway is glycolipid biosynthesis; lipid IV(A) biosynthesis; lipid IV(A) from (3R)-3-hydroxytetradecanoyl-[acyl-carrier-protein] and UDP-N-acetyl-alpha-D-glucosamine: step 6/6. Transfers the gamma-phosphate of ATP to the 4'-position of a tetraacyldisaccharide 1-phosphate intermediate (termed DS-1-P) to form tetraacyldisaccharide 1,4'-bis-phosphate (lipid IVA). This chain is Tetraacyldisaccharide 4'-kinase, found in Xanthomonas euvesicatoria pv. vesicatoria (strain 85-10) (Xanthomonas campestris pv. vesicatoria).